The sequence spans 202 residues: uncharacterized protein (202 aa).

Lys136 participates in a covalent cross-link: Isoglutamyl lysine isopeptide (Lys-Gln) (interchain with Q-Cter in protein Pup).

This is an uncharacterized protein from Mycobacterium tuberculosis (strain CDC 1551 / Oshkosh).